Consider the following 578-residue polypeptide: Hyaluronan synthase 1 (578 aa).

The Cytoplasmic portion of the chain corresponds to 1–25; that stretch reads MRQQDAPKPTPAACRCSGLARRVLT. Residues 26 to 46 form a helical membrane-spanning segment; that stretch reads IAFALLILGLMTWAYAAGVPL. At 47 to 52 the chain is on the extracellular side; it reads ASDRYG. Residues 53–73 traverse the membrane as a helical segment; that stretch reads LLAFGLYGAFLSAHLVAQSLF. Residues 74 to 399 lie on the Cytoplasmic side of the membrane; sequence AYLEHRRVAA…NALWWHRHHA (326 aa). Residues 400–420 traverse the membrane as a helical segment; the sequence is WMTYEAVVSGLFPFFVAATVL. Residues 421-430 are Extracellular-facing; it reads RLFYAGRPWA. Residues 431–451 form a helical membrane-spanning segment; sequence LLWVLLCVQGVALAKAAFAAW. At 452–457 the chain is on the cytoplasmic side; it reads LRGCLR. Residues 458 to 478 traverse the membrane as a helical segment; sequence MVLLSLYAPLYMCGLLPAKFL. Over 479–497 the chain is Extracellular; the sequence is ALVTMNQSGWGTSGRRKLA. Residues 498–518 traverse the membrane as a helical segment; that stretch reads ANYVPLLPLALWALLLLGGLV. Residues 519–540 are Cytoplasmic-facing; the sequence is RSVAHEARADWSGPSRAAEAYH. A helical transmembrane segment spans residues 541 to 561; it reads LAAGAGAYVGYWVAMLTLYWV. Over 562–578 the chain is Extracellular; sequence GVRRLCRRRTGGYRVQV.

The protein belongs to the NodC/HAS family. Mg(2+) serves as cofactor. In terms of tissue distribution, widely expressed. Highly expressed in ovary followed by spleen, thymus, prostate, testes and large intestine. Weakly expressed in small intestine.

The protein resides in the membrane. It carries out the reaction [hyaluronan](n) + UDP-N-acetyl-alpha-D-glucosamine = N-acetyl-beta-D-glucosaminyl-(1-&gt;4)-[hyaluronan](n) + UDP + H(+). It catalyses the reaction N-acetyl-beta-D-glucosaminyl-(1-&gt;4)-[hyaluronan](n) + UDP-alpha-D-glucuronate = [hyaluronan](n+1) + UDP + H(+). It participates in glycan biosynthesis; hyaluronan biosynthesis. In terms of biological role, catalyzes the addition of GlcNAc or GlcUA monosaccharides to the nascent hyaluronan polymer. Therefore, it is essential to hyaluronan synthesis a major component of most extracellular matrices that has a structural role in tissues architectures and regulates cell adhesion, migration and differentiation. This is one of the isozymes catalyzing that reaction. Also able to catalyze the synthesis of chito-oligosaccharide depending on the substrate. The chain is Hyaluronan synthase 1 (HAS1) from Homo sapiens (Human).